We begin with the raw amino-acid sequence, 261 residues long: WW domain-binding protein 2 (261 aa).

In terms of domain architecture, GRAM spans 1 to 84; sequence MALNKNHSEG…YLMKDCEIKQ (84 aa). Phosphotyrosine; by YES and SRC is present on Tyr-192. The short motif at 196-200 is the PPxY motif 1 element; sequence PPPPY. The span at 196 to 209 shows a compositional bias: pro residues; that stretch reads PPPPYPGPMEPPVS. The tract at residues 196 to 261 is disordered; it reads PPPPYPGPME…YYPPEDKKTQ (66 aa). The span at 218 to 230 shows a compositional bias: low complexity; that stretch reads AAEAKAAEAAASA. Phosphotyrosine; by YES and SRC is present on Tyr-231. The span at 245 to 254 shows a compositional bias: pro residues; that stretch reads SQPPPPPYYP. Positions 248 to 252 match the PPxY motif 2 motif; the sequence is PPPPY.

In terms of assembly, binds to the WW domain of YAP1, WWP1 and WWP2. Interacts with NEDD4. Interacts with ESR1 and UBE3A. In terms of processing, phosphorylated in repsonse to EGF as well as estrogen and progesterone hormones. Tyr-192 and Tyr-231 are phosphorylated by YES and SRC inducing nuclear translocation. As to expression, ubiquitous.

It is found in the cytoplasm. The protein localises to the nucleus. In terms of biological role, acts as a transcriptional coactivator of estrogen and progesterone receptors (ESR1 and PGR) upon hormone activation. In presence of estrogen, binds to ESR1-responsive promoters. Synergizes with YAP1 to enhance PGR activity. Modulates expression of post-synaptic scaffolding proteins via regulation of ESR1, ESR2 and PGR. The sequence is that of WW domain-binding protein 2 from Homo sapiens (Human).